Reading from the N-terminus, the 271-residue chain is 2-dehydro-3-deoxyphosphooctonate aldolase (271 aa).

The protein belongs to the KdsA family.

The protein resides in the cytoplasm. The enzyme catalyses D-arabinose 5-phosphate + phosphoenolpyruvate + H2O = 3-deoxy-alpha-D-manno-2-octulosonate-8-phosphate + phosphate. It participates in carbohydrate biosynthesis; 3-deoxy-D-manno-octulosonate biosynthesis; 3-deoxy-D-manno-octulosonate from D-ribulose 5-phosphate: step 2/3. Its pathway is bacterial outer membrane biogenesis; lipopolysaccharide biosynthesis. The sequence is that of 2-dehydro-3-deoxyphosphooctonate aldolase from Campylobacter jejuni subsp. jejuni serotype O:23/36 (strain 81-176).